The chain runs to 320 residues: MAAHYLDFERPIADLESKIEELSKLSETAGPGAFESEIQALRDRAQQMRKEAYAGLDAWQKTMVARHPERPHLKDYIAGLIDEFVELRGDRKFADDQAIVGGLGRFRGVPVVVMGHEKGHDTTTRLKHNFGMARPEGYRKAVRLMDMAERFNLPVITFVDTAGAYPGLGAEERGQAEAIARSTERGLVLGTPMVATIVGEGGSGGAIALAGANKVLILEHSIYSVISPEGAASILWRDGARAKDAAANMKITAQDLIQLKIVDRIVEEPAGGAHSDPDAAIQSVGDAVEDELKALMKLSAAELKKQRAARFYAIGREGLQ.

The region spanning 33–294 (AFESEIQALR…GDAVEDELKA (262 aa)) is the CoA carboxyltransferase C-terminal domain.

Belongs to the AccA family. In terms of assembly, acetyl-CoA carboxylase is a heterohexamer composed of biotin carboxyl carrier protein (AccB), biotin carboxylase (AccC) and two subunits each of ACCase subunit alpha (AccA) and ACCase subunit beta (AccD).

The protein resides in the cytoplasm. It carries out the reaction N(6)-carboxybiotinyl-L-lysyl-[protein] + acetyl-CoA = N(6)-biotinyl-L-lysyl-[protein] + malonyl-CoA. It functions in the pathway lipid metabolism; malonyl-CoA biosynthesis; malonyl-CoA from acetyl-CoA: step 1/1. Component of the acetyl coenzyme A carboxylase (ACC) complex. First, biotin carboxylase catalyzes the carboxylation of biotin on its carrier protein (BCCP) and then the CO(2) group is transferred by the carboxyltransferase to acetyl-CoA to form malonyl-CoA. In Caulobacter sp. (strain K31), this protein is Acetyl-coenzyme A carboxylase carboxyl transferase subunit alpha.